The primary structure comprises 1216 residues: Sodium/potassium/calcium exchanger 1 (1216 aa).

The Extracellular portion of the chain corresponds to 1–446; it reads MGKLIRMGAQ…DLFSVEERRQ (446 aa). The segment at 94–196 is disordered; sequence EATAGRDGTP…KYSPSPLGRM (103 aa). Polar residues-rich tracts occupy residues 110–135 and 144–166; these read NTPS…TPTG and SATP…SYTR. Residues asparagine 290 and asparagine 303 are each glycosylated (N-linked (GlcNAc...) asparagine). The chain crosses the membrane as a helical span at residues 447 to 467; it reads GWVVLHIFGMMYVFVALAIVC. Residues 468-491 lie on the Cytoplasmic side of the membrane; sequence DEYFVPALGVITDKLQISEDVAGA. One copy of the Alpha-1 repeat lies at 488 to 528; it reads VAGATFMAAGGSAPELFTSLIGVFISHSNVGIGTIVGSAVF. The chain crosses the membrane as a helical span at residues 492–512; that stretch reads TFMAAGGSAPELFTSLIGVFI. The Extracellular portion of the chain corresponds to 513-518; the sequence is SHSNVG. The helical transmembrane segment at 519–539 threads the bilayer; that stretch reads IGTIVGSAVFNILFVIGTCAL. At 540–557 the chain is on the cytoplasmic side; it reads FSREILNLTWWPLFRDIT. A helical transmembrane segment spans residues 558-578; the sequence is FYIFDLMMLILFFLDSLIAWW. Residue glutamate 579 is a topological domain, extracellular. A helical membrane pass occupies residues 580–600; the sequence is SVLLLLAYAFYVFTMKWNQQL. The Cytoplasmic segment spans residues 601–1024; the sequence is ELWVKEQLNK…SLEWPETRRK (424 aa). Position 652 is a phosphoserine (serine 652). The segment at 677–1018 is disordered; that stretch reads GEARPSKDKE…ENEQPLSLEW (342 aa). Basic and acidic residues predominate over residues 702–712; it reads AESKPEEEPAK. A Phosphothreonine modification is found at threonine 717. A 1; approximate repeat occupies 796-811; sequence DEDEGEIQAEGGEVKG. The tract at residues 796-928 is 8 X 17 AA tandem repeats of D-E-D-E-G-E-I-Q-A-G-E-[GA]-G-E-V-[EK]-G; the sequence is DEDEGEIQAE…QAGEAGEVEG (133 aa). A run of 6 repeats spans residues 812–828, 829–845, 846–862, 863–879, 880–896, and 897–913. 7 stretches are compositionally biased toward acidic residues: residues 824–834, 841–851, 858–868, 875–885, 892–902, 924–941, and 981–1011; these read GEVEGDEDEGE, GEVE…DEGE, and GDSE…EENE. One copy of the 8; approximate repeat lies at 914–928; that stretch reads DEGEIQAGEAGEVEG. Residues 1025–1045 traverse the membrane as a helical segment; the sequence is QAIYLFLLPIVFPLWLTVPDV. Over 1046 to 1052 the chain is Extracellular; sequence RRLEAKK. Residues 1053-1073 traverse the membrane as a helical segment; sequence FFVITFLGSILWIAMFSYLMV. Residues 1074–1088 lie on the Cytoplasmic side of the membrane; the sequence is WWAHQVGETIGISEE. Residues 1089-1109 form a helical membrane-spanning segment; sequence IMGLTILAAGTSIPDLITSVI. The stretch at 1096 to 1127 is one Alpha-2 repeat; the sequence is AAGTSIPDLITSVIVARKGLGDMAVSSSVGSN. Over 1110–1127 the chain is Extracellular; the sequence is VARKGLGDMAVSSSVGSN. Residues 1128-1148 traverse the membrane as a helical segment; it reads IFDITVGLPLPWMLFSLINGL. Topologically, residues 1149 to 1157 are cytoplasmic; the sequence is QPVAVSSNG. A helical transmembrane segment spans residues 1158 to 1178; the sequence is LFCAIVLLFLMLLFVISSIAL. The Extracellular portion of the chain corresponds to 1179–1185; sequence CKWRMNK. The helical transmembrane segment at 1186–1206 threads the bilayer; the sequence is ILGFTMFLLYFVFLIISVMLE. Residues 1207 to 1216 lie on the Cytoplasmic side of the membrane; sequence DRIISCPVSV.

The protein belongs to the Ca(2+):cation antiporter (CaCA) (TC 2.A.19) family. SLC24A subfamily. Post-translationally, the uncleaved signal sequence is required for efficient membrane targeting and proper membrane integration and topology. Glycosylated. Retina.

It is found in the cell membrane. It catalyses the reaction Ca(2+)(out) + K(+)(out) + 4 Na(+)(in) = Ca(2+)(in) + K(+)(in) + 4 Na(+)(out). Its function is as follows. Calcium, potassium:sodium antiporter that transports 1 Ca(2+) and 1 K(+) in exchange for 4 Na(+). Critical component of the visual transduction cascade, controlling the calcium concentration of outer segments during light and darkness. Light causes a rapid lowering of cytosolic free calcium in the outer segment of both retinal rod and cone photoreceptors and the light-induced lowering of calcium is caused by extrusion via this protein which plays a key role in the process of light adaptation. The polypeptide is Sodium/potassium/calcium exchanger 1 (SLC24A1) (Bos taurus (Bovine)).